The sequence spans 79 residues: ATP synthase subunit c (79 aa).

The next 2 helical transmembrane spans lie at 11 to 31 (ISAA…IGIL) and 55 to 75 (IVMG…LYLI).

Belongs to the ATPase C chain family. As to quaternary structure, F-type ATPases have 2 components, F(1) - the catalytic core - and F(0) - the membrane proton channel. F(1) has five subunits: alpha(3), beta(3), gamma(1), delta(1), epsilon(1). F(0) has three main subunits: a(1), b(2) and c(10-14). The alpha and beta chains form an alternating ring which encloses part of the gamma chain. F(1) is attached to F(0) by a central stalk formed by the gamma and epsilon chains, while a peripheral stalk is formed by the delta and b chains.

The protein resides in the cell membrane. Its function is as follows. F(1)F(0) ATP synthase produces ATP from ADP in the presence of a proton or sodium gradient. F-type ATPases consist of two structural domains, F(1) containing the extramembraneous catalytic core and F(0) containing the membrane proton channel, linked together by a central stalk and a peripheral stalk. During catalysis, ATP synthesis in the catalytic domain of F(1) is coupled via a rotary mechanism of the central stalk subunits to proton translocation. Functionally, key component of the F(0) channel; it plays a direct role in translocation across the membrane. A homomeric c-ring of between 10-14 subunits forms the central stalk rotor element with the F(1) delta and epsilon subunits. This chain is ATP synthase subunit c, found in Wigglesworthia glossinidia brevipalpis.